A 138-amino-acid chain; its full sequence is MGQMTVQIVTPDGIKYDHHAAFVLVKTVDGEMGVYSGHEELIAVLEIGEMKVRRVDDENHVDWIAVNGGIIEVNKDIITVISDSAERERDIDISRAERAKLRAERELEEAQTARNIDMEMRATVALQRAINRIRVGKH.

It belongs to the ATPase epsilon chain family. In terms of assembly, F-type ATPases have 2 components, CF(1) - the catalytic core - and CF(0) - the membrane proton channel. CF(1) has five subunits: alpha(3), beta(3), gamma(1), delta(1), epsilon(1). CF(0) has three main subunits: a, b and c.

The protein resides in the cell membrane. In terms of biological role, produces ATP from ADP in the presence of a proton gradient across the membrane. The polypeptide is ATP synthase epsilon chain (Streptococcus suis (strain 98HAH33)).